The sequence spans 887 residues: MSLFKARDWWSTILGDKEEFDQGCLCLANVDNSGNGQDKIIVGSFMGYLRIFSPHPAKTGDGAQAEDLLLEVDLRDPVLQVEVGKFVSGTEMLHLAVLHSRKLCVYSVSGTLGNVEHGNQCQMKLMYEHNLQRTACNMTYGSFGGVKGRDLICIQSMDGMLMVFEQESYAFGRFLPGFLLPGPLAYSSRTDSFLTVSSCQQVESYKYQVLAFATDADKRQETEQQKLGSGKRLVVDWTLNIGEQALDICIVSFNQSASSVFVLGERNFFCLKDNGQIRFMKKLDWSPSCFLPYCSVSEGTINTLIGNHNNMLHIYQDVTLKWATQLPHIPVAVRVGCLHDLKGVIVTLSDDGHLQCSYLGTDPSLFQAPNVQSRELNYDELDVEMKELQKIIKDVNKSQGVWPMTEREDDLNVSVVVSPNFDSVSQATDVEVGTDLVPSVTVKVTLQNRVILQKAKLSVYVQPPLELTCDQFTFEFMTPDLTRTVSFSVYLKRSYTPSELEGNAVVSYSRPTDRNPDGIPRVIQCKFRLPLKLICLPGQPSKTASHKITIDTNKSPVSLLSLFPGFASQSDDDQVNVMGFHFLGGARITVLASKTSQRYRIQSEQFEDLWLITNELILRLQEYFEKQGVKDFACSFSGSIPLQEYFELIDHHFELRINGEKLEELLSERAVQFRAIQRRLLARFKDKTPAPLQHLDTLLDGTYKQVIALADAVEENQGNLFQSFTRLKSATHLVILLIALWQKLSADQVAILEAAFLPLQEDTQELGWEETVDAAISHLLKTCLSKSSKEQALNLNSQLNIPKDTSQLKKHITLLCDRLSKGGRLCLSTDAAAPQTMVMPGGCTTIPESDLEERSVEQDSTELFTNHRHLTAETPRPEVSPLQGVSE.

The tract at residues 1 to 407 is seven-bladed beta-propeller; it reads MSLFKARDWW…SQGVWPMTER (407 aa). An interaction with LZTL1 region spans residues 685–765; sequence KDKTPAPLQH…FLPLQEDTQE (81 aa). The disordered stretch occupies residues 850-887; it reads DLEERSVEQDSTELFTNHRHLTAETPRPEVSPLQGVSE.

As to quaternary structure, part of BBSome complex, that contains BBS1, BBS2, BBS4, BBS5, BBS7, BBS8/TTC8, BBS9 and BBIP10. Interacts with LZTL1; the interaction mediates the association of LZTL1 with the BBsome complex and regulates BBSome ciliary trafficking. As to expression, widely expressed. Expressed in adult heart, skeletal muscle, lung, liver, kidney, placenta and brain, and in fetal kidney, lung, liver and brain.

The protein resides in the cytoplasm. Its subcellular location is the cytoskeleton. It is found in the microtubule organizing center. It localises to the centrosome. The protein localises to the cell projection. The protein resides in the cilium membrane. Its subcellular location is the centriolar satellite. The BBSome complex is thought to function as a coat complex required for sorting of specific membrane proteins to the primary cilia. The BBSome complex is required for ciliogenesis but is dispensable for centriolar satellite function. This ciliogenic function is mediated in part by the Rab8 GDP/GTP exchange factor, which localizes to the basal body and contacts the BBSome. Rab8(GTP) enters the primary cilium and promotes extension of the ciliary membrane. Firstly the BBSome associates with the ciliary membrane and binds to RAB3IP/Rabin8, the guanosyl exchange factor (GEF) for Rab8 and then the Rab8-GTP localizes to the cilium and promotes docking and fusion of carrier vesicles to the base of the ciliary membrane. Required for proper BBSome complex assembly and its ciliary localization. This Homo sapiens (Human) protein is Protein PTHB1 (BBS9).